The following is a 2628-amino-acid chain: Hemagglutinin A (2628 aa).

The signal sequence occupies residues 1-24; the sequence is MRKLNSLFSLAVLLSLLCWGQTAA. Peptidase C25-like regions lie at residues 25–539, 540–995, 996–1451, 1452–1907, and 2074–2628; these read AQGG…TPPP, GGTS…TPPP, and IDAD…LAVK. Disordered regions lie at residues 493–512, 520–546, 944–1002, 1400–1458, 1856–1881, 1890–1909, and 2336–2358; these read WDAP…LSES, SWKT…SFAG, KWDA…SFAG, KWDA…SESF, KTID…PPGG, and SSWK…PPGG. Over residues 496-508 the composition is skewed to low complexity; the sequence is PNGTPNPNPGTTT.

Belongs to the peptidase C25 family.

In terms of biological role, agglutinates erythrocytes. This is Hemagglutinin A (hagA) from Porphyromonas gingivalis (Bacteroides gingivalis).